Consider the following 179-residue polypeptide: Replication restart protein DnaT (179 aa).

Residues 156-179 are disordered; it reads GGLPKRDVNTVSEPDSQIPPGFRG.

Belongs to the DnaT family. Homooligomerizes. Interacts with PriB. Component of the replication restart primosome. Primosome assembly occurs via a 'hand-off' mechanism. PriA binds to replication forks, subsequently PriB then DnaT bind; DnaT then displaces ssDNA to generate the helicase loading substrate.

In terms of biological role, involved in the restart of stalled replication forks, which reloads the replicative helicase on sites other than the origin of replication. Can function in multiple replication restart pathways. Displaces ssDNA from a PriB-ssDNA complex. Probably forms a spiral filament on ssDNA. The protein is Replication restart protein DnaT of Escherichia coli O1:K1 / APEC.